The primary structure comprises 235 residues: 15,16-dihydrobiliverdin:ferredoxin oxidoreductase (235 aa).

This sequence belongs to the HY2 family.

The catalysed reaction is 15,16-dihydrobiliverdin + oxidized 2[4Fe-4S]-[ferredoxin] = biliverdin IXalpha + reduced 2[4Fe-4S]-[ferredoxin] + 2 H(+). Its function is as follows. Catalyzes the two-electron reduction of biliverdin IX-alpha at the C15 methine bridge. The protein is 15,16-dihydrobiliverdin:ferredoxin oxidoreductase of Synechococcus sp. (strain CC9605).